We begin with the raw amino-acid sequence, 84 residues long: MNLYLLLGALAIFSLVYDKKENSIFLYLLILFLVFIIVSPAIISKNTESTVEDIPSHKAKSVRKKLEIEQALDAILNKNTSSID.

As to quaternary structure, interacts with protein Ac75.

It localises to the host cytoplasm. Its subcellular location is the host nucleus. Functionally, plays an essential role in budded virion (BV) and occluded derived virion (ODV) development. Participates in intranuclear microvesicle formation, ODV envelopment, and subsequent embedding of virions into occlusion bodies. This is Protein Ac76 (Ac76) from Lepidoptera (butterflies and moths).